The chain runs to 138 residues: ATP synthase epsilon chain (138 aa).

This sequence belongs to the ATPase epsilon chain family. F-type ATPases have 2 components, CF(1) - the catalytic core - and CF(0) - the membrane proton channel. CF(1) has five subunits: alpha(3), beta(3), gamma(1), delta(1), epsilon(1). CF(0) has three main subunits: a, b and c.

The protein resides in the cell inner membrane. Its function is as follows. Produces ATP from ADP in the presence of a proton gradient across the membrane. This Idiomarina loihiensis (strain ATCC BAA-735 / DSM 15497 / L2-TR) protein is ATP synthase epsilon chain.